The primary structure comprises 160 residues: Snaclec subunit A (160 aa).

The first 23 residues, 1 to 23, serve as a signal peptide directing secretion; the sequence is MGRFILVNLGLLVVAFSLRGSEA. 3 disulfide bridges follow: Cys25/Cys36, Cys53/Cys150, and Cys125/Cys142. One can recognise a C-type lectin domain in the interval 32–151; it reads YDKYCYKVFD…CDFTLPFICK (120 aa).

This sequence belongs to the snaclec family. In terms of assembly, heterodimer of subunits A and B; disulfide-linked. As to expression, expressed by the venom gland.

The protein localises to the secreted. Functionally, interferes with one step of hemostasis (modulation of platelet aggregation, or coagulation cascade, for example). The chain is Snaclec subunit A from Philodryas olfersii (Green snake).